The primary structure comprises 500 residues: NAD(P)H-quinone oxidoreductase chain 4, chloroplastic (500 aa).

14 consecutive transmembrane segments (helical) span residues 4–24, 37–57, 87–107, 113–130, 134–154, 167–187, 211–231, 242–262, 272–292, 313–333, 334–354, 386–406, 417–437, and 462–482; these read FPWL…IFFL, MSIC…HFQL, LGSI…AWPV, LFYF…GLFS, LLLF…LLSM, FILY…GMGL, ILFY…IPLH, HYST…YGLI, AHYL…IYAA, MGFI…GAIL, QILS…TACD, LALP…GLIT, LITF…LSML, and LFLL…PDFV.

Belongs to the complex I subunit 4 family.

The protein localises to the plastid. It is found in the chloroplast thylakoid membrane. The enzyme catalyses a plastoquinone + NADH + (n+1) H(+)(in) = a plastoquinol + NAD(+) + n H(+)(out). It carries out the reaction a plastoquinone + NADPH + (n+1) H(+)(in) = a plastoquinol + NADP(+) + n H(+)(out). The polypeptide is NAD(P)H-quinone oxidoreductase chain 4, chloroplastic (Oryza nivara (Indian wild rice)).